The following is a 4265-amino-acid chain: Dynein axonemal heavy chain 1 (4265 aa).

The interval 1-88 (MEQPNSKGYS…KSPLTGTDKK (88 aa)) is disordered. Positions 1-1542 (MEQPNSKGYS…YIRAVNAEFI (1542 aa)) are stem. Positions 60 to 69 (PHLPLPPAPP) are enriched in pro residues. AAA stretches follow at residues 1543–1764 (YGYE…VISA), 1824–2057 (EAIR…SSVK), 2189–2449 (TMVP…VFQG), and 2547–2799 (DYNQ…LTRH). Residues 1581–1588 (GPAGTGKT) carry the GPAGTGKT motif motif. 1581 to 1588 (GPAGTGKT) contributes to the ATP binding site. Residues 1631 to 1637 (CFDEFNR) carry the CFDEFNR motif motif. Residues 1862–1869 (GPTGSGKS), 2227–2234 (GPTGTGKT), and 2586–2593 (GVGGSGRS) contribute to the ATP site. Positions 2814-3112 (FSILIGQKKL…EELELKCEQC (299 aa)) are stalk. Residues 3074–3122 (LDEAKQRLREVEDGIATMQAKYRECITKKEELELKCEQCEQRLGRAGKL) are a coiled coil. 2 AAA regions span residues 3197-3427 (LGNP…EIQA) and 3640-3859 (MQDF…QLKM).

This sequence belongs to the dynein heavy chain family. As to quaternary structure, consists of at least two heavy chains and a number of intermediate and light chains. Expressed primarily in trachea and testis, 2 tissues containing axonemal structures. Also expressed in brain.

Its subcellular location is the cytoplasm. The protein resides in the cytoskeleton. It localises to the cilium axoneme. The protein localises to the cell projection. It is found in the cilium. Its subcellular location is the flagellum. In terms of biological role, force generating protein of cilia required for sperm flagellum motility. Produces force towards the minus ends of microtubules. Dynein has ATPase activity; the force-producing power stroke is thought to occur on release of ADP. Required in spermatozoa for the formation of the inner dynein arms and biogenesis of the axoneme. This chain is Dynein axonemal heavy chain 1, found in Homo sapiens (Human).